A 153-amino-acid chain; its full sequence is MKFCKPKPKSILSLDIGTKRIGLAYCDPLCITSNILPAVKRFENNQEIKIIRNYINEFNLTGFIVGIPLDEKGKMTTQAIDCKNYGQLLSNELKLPFSYVNEHSSTWESSERFGIKKDKSGLIDSFSAKIILEQWIEEGPELEEIAGKRQIKY.

Belongs to the YqgF nuclease family.

It localises to the cytoplasm. Functionally, could be a nuclease involved in processing of the 5'-end of pre-16S rRNA. The polypeptide is Putative pre-16S rRNA nuclease (Prochlorococcus marinus (strain AS9601)).